The sequence spans 399 residues: Bombesin receptor subtype-3 (399 aa).

The Extracellular segment spans residues 1–41; the sequence is MSQRQPQSPNQTLISITNDTETSSSAVSNDTTPKGWTGDNS. Residues asparagine 10, asparagine 18, and asparagine 29 are each glycosylated (N-linked (GlcNAc...) asparagine). The chain crosses the membrane as a helical span at residues 42-63; that stretch reads PGIEALCAIYITYAVIISVGIL. The Cytoplasmic segment spans residues 64–82; the sequence is GNAILIKVFFKTKSMQTVP. Residues 83–103 traverse the membrane as a helical segment; that stretch reads NIFITSLAFGDLLLLLTCVPV. The Extracellular segment spans residues 104-121; the sequence is DATHYLAEGWLFGKVGCK. Cysteine 120 and cysteine 203 are joined by a disulfide. The helical transmembrane segment at 122–143 threads the bilayer; it reads VLSFIRLTSVGVSVFTLTILSA. At 144 to 163 the chain is on the cytoplasmic side; that stretch reads DRYKAVVKPLERQPSNAILK. A helical membrane pass occupies residues 164–184; the sequence is TCAKAGGIWIMAMIFALPEAI. Over 185 to 220 the chain is Extracellular; that stretch reads FSNVYTFQDPNRNVTFESCNSYPISERLLQEIHSLL. A helical transmembrane segment spans residues 221-241; the sequence is CFLVFYIIPLSIISVYYSLIA. At 242–272 the chain is on the cytoplasmic side; that stretch reads RTLYKSTLNIPTEEQSHARKQIESRKRIAKT. The chain crosses the membrane as a helical span at residues 273-293; sequence VLVLVALFALCWLPNHLLYLY. Topologically, residues 294-313 are extracellular; the sequence is HSFTYESYAEPSDVPFVVTI. The helical transmembrane segment at 314 to 333 threads the bilayer; the sequence is FSRVLAFSNSCVNPFALYWL. Residues 334-399 lie on the Cytoplasmic side of the membrane; it reads SKTFQKHFKA…STAKKGEDKV (66 aa). Cysteine 347 is lipidated: S-palmitoyl cysteine.

The protein belongs to the G-protein coupled receptor 1 family. As to quaternary structure, interacts with C6orf89.

The protein resides in the cell membrane. In terms of biological role, role in sperm cell division, maturation, or function. This receptor mediates its action by association with G proteins that activate a phosphatidylinositol-calcium second messenger system. The chain is Bombesin receptor subtype-3 (Brs3) from Rattus norvegicus (Rat).